A 306-amino-acid polypeptide reads, in one-letter code: Acetyl-coenzyme A carboxylase carboxyl transferase subunit beta (306 aa).

Residues leucine 25 to threonine 294 form the CoA carboxyltransferase N-terminal domain. Residues alanine 284–alanine 306 are disordered.

The protein belongs to the AccD/PCCB family. As to quaternary structure, acetyl-CoA carboxylase is a heterohexamer composed of biotin carboxyl carrier protein (AccB), biotin carboxylase (AccC) and two subunits each of ACCase subunit alpha (AccA) and ACCase subunit beta (AccD).

The protein resides in the cytoplasm. It catalyses the reaction N(6)-carboxybiotinyl-L-lysyl-[protein] + acetyl-CoA = N(6)-biotinyl-L-lysyl-[protein] + malonyl-CoA. It participates in lipid metabolism; malonyl-CoA biosynthesis; malonyl-CoA from acetyl-CoA: step 1/1. Component of the acetyl coenzyme A carboxylase (ACC) complex. Biotin carboxylase (BC) catalyzes the carboxylation of biotin on its carrier protein (BCCP) and then the CO(2) group is transferred by the transcarboxylase to acetyl-CoA to form malonyl-CoA. This Bartonella tribocorum (strain CIP 105476 / IBS 506) protein is Acetyl-coenzyme A carboxylase carboxyl transferase subunit beta.